The primary structure comprises 278 residues: Pantothenate synthetase (278 aa).

26–33 (MGNLHEGH) is an ATP binding site. His-33 serves as the catalytic Proton donor. Gln-57 lines the (R)-pantoate pocket. Gln-57 provides a ligand contact to beta-alanine. 144-147 (GKKD) is a binding site for ATP. Gln-150 is a binding site for (R)-pantoate. ATP is bound by residues Gly-173 and 181 to 184 (LSSR).

Belongs to the pantothenate synthetase family. In terms of assembly, homodimer.

The protein resides in the cytoplasm. It catalyses the reaction (R)-pantoate + beta-alanine + ATP = (R)-pantothenate + AMP + diphosphate + H(+). It functions in the pathway cofactor biosynthesis; (R)-pantothenate biosynthesis; (R)-pantothenate from (R)-pantoate and beta-alanine: step 1/1. Catalyzes the condensation of pantoate with beta-alanine in an ATP-dependent reaction via a pantoyl-adenylate intermediate. This Neisseria meningitidis serogroup A / serotype 4A (strain DSM 15465 / Z2491) protein is Pantothenate synthetase.